Here is a 381-residue protein sequence, read N- to C-terminus: Cytochrome b (381 aa).

4 helical membrane passes run 34 to 54 (FGSL…FLAM), 78 to 99 (WLIR…YLHI), 114 to 134 (WNIG…GYVL), and 179 to 199 (FFAF…IHLL). Heme b contacts are provided by His-84 and His-98. Residues His-183 and His-197 each coordinate heme b. His-202 serves as a coordination point for a ubiquinone. 4 consecutive transmembrane segments (helical) span residues 227 to 247 (YKDL…ALFM), 289 to 309 (LGGV…PLLH), 321 to 341 (LTQI…WIGG), and 348 to 368 (FITV…IIMP).

This sequence belongs to the cytochrome b family. In terms of assembly, the cytochrome bc1 complex contains 3 respiratory subunits (MT-CYB, CYC1 and UQCRFS1), 2 core proteins (UQCRC1 and UQCRC2) and probably 6 low-molecular weight proteins. Heme b serves as cofactor.

Its subcellular location is the mitochondrion inner membrane. Component of the ubiquinol-cytochrome c reductase complex (complex III or cytochrome b-c1 complex) that is part of the mitochondrial respiratory chain. The b-c1 complex mediates electron transfer from ubiquinol to cytochrome c. Contributes to the generation of a proton gradient across the mitochondrial membrane that is then used for ATP synthesis. The protein is Cytochrome b (mt-cyb) of Sphyrna tiburo vespertina (Pacific bonnethead shark).